Here is a 637-residue protein sequence, read N- to C-terminus: Chaperone protein HtpG (637 aa).

The a; substrate-binding stretch occupies residues 1 to 347 (MTQSVHAETH…SNDLPLNVSR (347 aa)). The b stretch occupies residues 348 to 564 (EILQDNKVTV…NHGMSTQMIK (217 aa)). The interval 565-637 (LMRAAGQPVP…SRINRLLLQA (73 aa)) is c.

The protein belongs to the heat shock protein 90 family. Homodimer.

Its subcellular location is the cytoplasm. In terms of biological role, molecular chaperone. Has ATPase activity. This is Chaperone protein HtpG from Aeromonas salmonicida (strain A449).